We begin with the raw amino-acid sequence, 2008 residues long: Histone-lysine N-methyltransferase SETD1B (2008 aa).

Over residues methionine 1 to lysine 20 the composition is skewed to basic and acidic residues. The interval methionine 1–lysine 42 is disordered. Positions glutamine 22–serine 39 are enriched in polar residues. In terms of domain architecture, RRM spans aspartate 111–lysine 199. 9 disordered regions span residues asparagine 249–lysine 390, phenylalanine 402–threonine 652, proline 682–proline 725, arginine 950–glutamate 1172, threonine 1309–glutamate 1328, valine 1345–threonine 1461, valine 1563–glycine 1600, lysine 1674–arginine 1712, and glutamate 1814–glutamate 1842. The span at serine 251–proline 264 shows a compositional bias: low complexity. 5 stretches are compositionally biased toward polar residues: residues phenylalanine 265 to proline 293, proline 301 to proline 315, histidine 360 to leucine 381, serine 405 to serine 414, and aspartate 456 to serine 491. Residues leucine 492–methionine 521 are compositionally biased toward basic and acidic residues. Residues serine 524–proline 537 are compositionally biased toward low complexity. Composition is skewed to polar residues over residues glycine 540 to glycine 560 and alanine 582 to arginine 604. Basic and acidic residues-rich tracts occupy residues serine 606–valine 617 and glutamate 626–glycine 636. Residues glutamate 637–methionine 646 are compositionally biased toward acidic residues. Basic and acidic residues predominate over residues glutamate 979–glutamate 997. Residues leucine 1011–glutamate 1020 show a composition bias toward acidic residues. Over residues threonine 1021–glutamate 1031 the composition is skewed to basic and acidic residues. Composition is skewed to acidic residues over residues glutamate 1050–alanine 1094 and glutamate 1105–aspartate 1149. The span at arginine 1150–glutamate 1172 shows a compositional bias: basic and acidic residues. Low complexity predominate over residues valine 1345–proline 1356. Over residues serine 1378–leucine 1392 the composition is skewed to basic and acidic residues. Residues leucine 1418–serine 1427 are compositionally biased toward low complexity. Basic residues-rich tracts occupy residues leucine 1577–arginine 1587 and lysine 1681–lysine 1690. Pro residues predominate over residues isoleucine 1699–glutamine 1710. Residues arginine 1840–arginine 1845 carry the RxxxRR motif motif. In terms of domain architecture, SET spans lysine 1869–lysine 1986. Tyrosine 1985 contributes to the S-adenosyl-L-methionine binding site. One can recognise a Post-SET domain in the interval valine 1992 to asparagine 2008.

The protein belongs to the class V-like SAM-binding methyltransferase superfamily. As to quaternary structure, component of the SET1B/COMPASS complex.

It is found in the nucleus speckle. It localises to the chromosome. The catalysed reaction is L-lysyl(4)-[histone H3] + 3 S-adenosyl-L-methionine = N(6),N(6),N(6)-trimethyl-L-lysyl(4)-[histone H3] + 3 S-adenosyl-L-homocysteine + 3 H(+). Histone methyltransferase that specifically methylates 'Lys-4' of histone H3, when part of the SET1 histone methyltransferase (HMT) complex, but not if the neighboring 'Lys-9' residue is already methylated. H3 'Lys-4' methylation represents a specific tag for epigenetic transcriptional activation. The polypeptide is Histone-lysine N-methyltransferase SETD1B (SETD1B) (Gallus gallus (Chicken)).